The following is a 454-amino-acid chain: Glutamate--tRNA ligase (454 aa).

The 'HIGH' region motif lies at 7–17 (PSPTGCLHIGG). C96, C98, C123, and D125 together coordinate Zn(2+). The 'KMSKS' region signature appears at 230 to 234 (RLSKR). K233 contributes to the ATP binding site.

It belongs to the class-I aminoacyl-tRNA synthetase family. Glutamate--tRNA ligase type 1 subfamily. In terms of assembly, monomer. Requires Zn(2+) as cofactor.

Its subcellular location is the cytoplasm. The catalysed reaction is tRNA(Glu) + L-glutamate + ATP = L-glutamyl-tRNA(Glu) + AMP + diphosphate. Catalyzes the attachment of glutamate to tRNA(Glu) in a two-step reaction: glutamate is first activated by ATP to form Glu-AMP and then transferred to the acceptor end of tRNA(Glu). This Ruthia magnifica subsp. Calyptogena magnifica protein is Glutamate--tRNA ligase.